Consider the following 346-residue polypeptide: N-acetyl-gamma-glutamyl-phosphate reductase (346 aa).

Residue cysteine 149 is part of the active site.

It belongs to the NAGSA dehydrogenase family. Type 1 subfamily.

The protein resides in the cytoplasm. It carries out the reaction N-acetyl-L-glutamate 5-semialdehyde + phosphate + NADP(+) = N-acetyl-L-glutamyl 5-phosphate + NADPH + H(+). It participates in amino-acid biosynthesis; L-arginine biosynthesis; N(2)-acetyl-L-ornithine from L-glutamate: step 3/4. Catalyzes the NADPH-dependent reduction of N-acetyl-5-glutamyl phosphate to yield N-acetyl-L-glutamate 5-semialdehyde. The polypeptide is N-acetyl-gamma-glutamyl-phosphate reductase (Pelobacter propionicus (strain DSM 2379 / NBRC 103807 / OttBd1)).